The chain runs to 780 residues: Pendrin (780 aa).

Topologically, residues 1 to 87 (MAARGGRSEP…YRVKEWLLSD (87 aa)) are cytoplasmic. The helical transmembrane segment at 88–108 (IISGVSTGLVGTLQGMAYALL) threads the bilayer. A109 is a topological domain (extracellular). A helical membrane pass occupies residues 110 to 130 (AVPVQFGLYSAFFPILTYFVF). At 131 to 135 (GTSRH) the chain is on the cytoplasmic side. The helical transmembrane segment at 136–156 (ISVGPFPVVSLMVGSVVLSMA) threads the bilayer. The Extracellular portion of the chain corresponds to 157–191 (PDDHFLVPSGNGSALNSTTLDTGTRDAARVLLAST). The helical transmembrane segment at 192–212 (LTLLVGIIQLVFGGLQIGFIV) threads the bilayer. Residues 213 to 218 (RYLADP) are Cytoplasmic-facing. The helical transmembrane segment at 219–239 (LVGGFTTAAAFQVLVSQLKIV) threads the bilayer. The Extracellular portion of the chain corresponds to 240–263 (LNVSTKNYNGILSIIYTLIEIFQN). A helical membrane pass occupies residues 264-284 (IGDTNIADFIAGLLTIIVCMA). At 285–295 (VKELNDRFKHR) the chain is on the cytoplasmic side. Residues 296–316 (IPVPIPIEVIVTIIATAISYG) form a helical membrane-spanning segment. At 317-344 (ANLEKNYNAGIVKSIPSGFLPPVLPSVG) the chain is on the extracellular side. Residues 345 to 365 (LFSDMLAASFSIAVVAYAIAV) traverse the membrane as a helical segment. Over 366-384 (SVGKVYATKHDYVIDGNQE) the chain is Cytoplasmic. A helical membrane pass occupies residues 385–405 (FIAFGISNVFSGFFSCFVATT). Residues 406 to 421 (ALSRTAVQESTGGKTQ) are Extracellular-facing. The chain crosses the membrane as a helical span at residues 422–442 (VAGLISAVIVMVAIVALGRLL). The Cytoplasmic segment spans residues 443–448 (EPLQKS). Residues 449–469 (VLAAVVIANLKGMFMQVCDVP) form a helical membrane-spanning segment. The Extracellular portion of the chain corresponds to 470-486 (RLWKQNKTDAVIWVFTC). The helical transmembrane segment at 487-507 (IMSIILGLDLGLLAGLLFALL) threads the bilayer. At 508–780 (TVVLRVQFPS…QDEAMRRLAS (273 aa)) the chain is on the cytoplasmic side. The 195-residue stretch at 535–729 (HYKNLEEPEG…LTVHDAILHL (195 aa)) folds into the STAS domain.

This sequence belongs to the SLC26A/SulP transporter (TC 2.A.53) family. Interacts with IQGAP1. This interaction enhances the chloride-bicarbonate exchange activity of SLC26A4. In terms of tissue distribution, highly expressed in the kidney (at protein level). Throughout the endolymphatic duct and sac, in distinct areas of the utricle and saccule, and in the external sulcus region within the cochlea. Expressed in the parotid gland.

Its subcellular location is the apical cell membrane. The protein resides in the cell membrane. It carries out the reaction chloride(in) = chloride(out). It catalyses the reaction iodide(out) = iodide(in). The catalysed reaction is hydrogencarbonate(in) + chloride(out) = hydrogencarbonate(out) + chloride(in). The enzyme catalyses iodide(in) + hydrogencarbonate(out) = iodide(out) + hydrogencarbonate(in). It carries out the reaction iodide(in) + chloride(out) = iodide(out) + chloride(in). It catalyses the reaction formate(in) + chloride(out) = formate(out) + chloride(in). Its function is as follows. Sodium-independent transporter of chloride and iodide. Mediates electroneutral iodide-chloride, iodide-bicarbonate and chloride-bicarbonate exchange with 1:1 stoichiometry. Mediates elctroneutral chloride-formate exchange. This chain is Pendrin (Slc26a4), found in Mus musculus (Mouse).